A 159-amino-acid chain; its full sequence is MVHFMVCGILLGFLVFKISRHLESRRDDGEFAPSTNLVWDLRRDLGNLFYGPNSGPLVGPLEPLNDLNIFNNLKIVEDQESYTLNKKIIHLCTRDLRSKRYYDKNTLMFVVLHELAHVLCRDIGHTDNFSTINQALLDYAIARGYYDPRKPFVKNYCSL.

It belongs to the IIV-6 136R family.

This is an uncharacterized protein from Invertebrate iridescent virus 3 (IIV-3).